A 455-amino-acid polypeptide reads, in one-letter code: Nuclear mRNA export protein THP1 (455 aa).

The 212-residue stretch at 220-431 (IEYRYLLGRY…QLCVVKKTTM (212 aa)) folds into the PCI domain.

As to quaternary structure, heterodimer with THP1. The SAC3-THP1 complex interacts with CDC31 and SUS1, and with the mRNA export factor MEX67-MTR2, the TREX complex component SUB2, and the nucleoporin NUP1.

The protein localises to the nucleus envelope. Component of the SAC3-THP1 complex, which functions in transcription-coupled mRNA export from the nucleus to the cytoplasm. SAC3-THP1 functions in docking export-competent ribonucleoprotein particles (mRNPs) to the nuclear entrance of the nuclear pore complex (nuclear basket), by association with components of the nuclear mRNA export machinery (MEX67-MTR2 and SUB2) in the nucleoplasm and the nucleoporin NUP1 at the nuclear basket. THP1 binds to RNA in vitro. In Saccharomyces cerevisiae (strain ATCC 204508 / S288c) (Baker's yeast), this protein is Nuclear mRNA export protein THP1 (THP1).